The following is a 184-amino-acid chain: GMP synthase [glutamine-hydrolyzing] subunit A (184 aa).

The region spanning 3-184 (RIVVVDNHGQ…ENFRDICAGD (182 aa)) is the Glutamine amidotransferase type-1 domain. The active-site Nucleophile is cysteine 73. Catalysis depends on residues histidine 161 and glutamate 163.

In terms of assembly, heterodimer composed of a glutamine amidotransferase subunit (A) and a GMP-binding subunit (B).

It catalyses the reaction XMP + L-glutamine + ATP + H2O = GMP + L-glutamate + AMP + diphosphate + 2 H(+). It participates in purine metabolism; GMP biosynthesis; GMP from XMP (L-Gln route): step 1/1. In terms of biological role, catalyzes the synthesis of GMP from XMP. This Natronomonas pharaonis (strain ATCC 35678 / DSM 2160 / CIP 103997 / JCM 8858 / NBRC 14720 / NCIMB 2260 / Gabara) (Halobacterium pharaonis) protein is GMP synthase [glutamine-hydrolyzing] subunit A.